Here is a 217-residue protein sequence, read N- to C-terminus: Oxygen-evolving enhancer protein 3, chloroplastic (217 aa).

Disordered regions lie at residues 1–25 and 73–95; these read MAQAMASMTGLSQGVQLPAGPRRAG and PIKLGPPPPPSGGLPGTLNSDQA. Residues 1-63 constitute a chloroplast transit peptide; the sequence is MAQAMASMTG…ATGIAGGALA (63 aa).

Belongs to the PsbQ family.

Its subcellular location is the plastid. It is found in the chloroplast thylakoid membrane. The protein is Oxygen-evolving enhancer protein 3, chloroplastic of Oryza sativa subsp. indica (Rice).